A 238-amino-acid polypeptide reads, in one-letter code: Ciliary microtubule associated protein 1B (238 aa).

Residues 182 to 207 (PGPCAYHVVNPMIYKTRAPQFTMLGR) form an STPGR repeat. Positions 206 to 238 (GRTLPPRENTKKPGPASYSVDKVVWSRGSRGRG) are disordered.

This sequence belongs to the CIMAP family.

It is found in the cell projection. The protein localises to the cilium. The protein resides in the flagellum. The protein is Ciliary microtubule associated protein 1B (Cimap1b) of Mus musculus (Mouse).